Reading from the N-terminus, the 200-residue chain is Exopolysaccharide production protein PSS (200 aa).

It belongs to the bacterial sugar transferase family.

This chain is Exopolysaccharide production protein PSS (pss), found in Rhizobium leguminosarum bv. phaseoli.